Reading from the N-terminus, the 281-residue chain is Protein EMBRYO DEFECTIVE 1674 (281 aa).

Composition is skewed to polar residues over residues 1–14 (MTTT…QSLS) and 24–41 (PNTS…PNSS). The disordered stretch occupies residues 1 to 47 (MTTTRAKSKFQSLSACRFTPLPEPNTSPSTYSKTLPKPNSSPGTDGT). Residues 66 to 153 (VTLSDWWLTK…LGFPYDWEDY (88 aa)) enclose the SANTA domain.

Functionally, required for normal embryo development. This is Protein EMBRYO DEFECTIVE 1674 from Arabidopsis thaliana (Mouse-ear cress).